We begin with the raw amino-acid sequence, 366 residues long: Aminomethyltransferase (366 aa).

Belongs to the GcvT family. In terms of assembly, the glycine cleavage system is composed of four proteins: P, T, L and H.

The enzyme catalyses N(6)-[(R)-S(8)-aminomethyldihydrolipoyl]-L-lysyl-[protein] + (6S)-5,6,7,8-tetrahydrofolate = N(6)-[(R)-dihydrolipoyl]-L-lysyl-[protein] + (6R)-5,10-methylene-5,6,7,8-tetrahydrofolate + NH4(+). The glycine cleavage system catalyzes the degradation of glycine. The chain is Aminomethyltransferase from Bordetella petrii (strain ATCC BAA-461 / DSM 12804 / CCUG 43448).